The chain runs to 133 residues: Salivary cystatin-L (133 aa).

The N-terminal stretch at 1–19 is a signal peptide; sequence MTASFALVLLLGGVAVCIA. The Cystatin domain maps to 29-115; it reads KANHQANPEY…VAQRTCTTVV (87 aa).

Belongs to the cystatin family. As to expression, salivary gland.

The protein resides in the secreted. In terms of biological role, inhibitor of cysteine proteinases. Inhibits host cathepsin L (CTSL) and S (CTSS). Modulates production of various cytokines and chemokines in lipopolysaccharide (LPS)-stimulated mouse dendritic cell. Suppresses maturation of mouse bone-marrow-derived dendritic cells (BMDCs). This Ixodes persulcatus (Taiga tick) protein is Salivary cystatin-L.